The following is a 179-amino-acid chain: Adenine phosphoribosyltransferase (179 aa).

The protein belongs to the purine/pyrimidine phosphoribosyltransferase family. As to quaternary structure, homodimer.

The protein resides in the cytoplasm. The catalysed reaction is AMP + diphosphate = 5-phospho-alpha-D-ribose 1-diphosphate + adenine. It participates in purine metabolism; AMP biosynthesis via salvage pathway; AMP from adenine: step 1/1. In terms of biological role, catalyzes a salvage reaction resulting in the formation of AMP, that is energically less costly than de novo synthesis. This Nitrobacter winogradskyi (strain ATCC 25391 / DSM 10237 / CIP 104748 / NCIMB 11846 / Nb-255) protein is Adenine phosphoribosyltransferase.